The primary structure comprises 745 residues: Cellulose synthase-like protein E2 (745 aa).

The span at 1–14 (MAGSGGGVVSGGRQ) shows a compositional bias: gly residues. Residues 1 to 20 (MAGSGGGVVSGGRQRGPPLF) form a disordered region. The next 2 helical transmembrane spans lie at 29–49 (AMAA…LIWL) and 66–86 (WAWL…VLTL). Residues Asp-155 and Asp-458 contribute to the active site. The next 5 helical transmembrane spans lie at 541–561 (FPTL…ISLF), 568–588 (WFIP…AESL), 658–678 (AMFV…VLGI), 686–706 (GPGG…IVAI), and 723–743 (LPAS…ILSI).

Belongs to the glycosyltransferase 2 family. Plant cellulose synthase-like E subfamily.

Its subcellular location is the golgi apparatus membrane. Its function is as follows. Thought to be a Golgi-localized beta-glycan synthase that polymerize the backbones of noncellulosic polysaccharides (hemicelluloses) of plant cell wall. The chain is Cellulose synthase-like protein E2 (CSLE2) from Oryza sativa subsp. japonica (Rice).